Reading from the N-terminus, the 382-residue chain is Probable G-protein coupled receptor 132 (382 aa).

Topologically, residues 1 to 42 (MRSEPTNAAGNTTLGVTSVLQSTSVPSSETCHVSYEESRVVL) are extracellular. Asn-11 carries an N-linked (GlcNAc...) asparagine glycan. A helical membrane pass occupies residues 43–65 (VVVYSAVCLLGLPANCLTAWLTL). Residues 66–76 (LQVLQRNVLAV) are Cytoplasmic-facing. Residues 77-99 (YLFCLSLCELLYISTVPLWIIYI) form a helical membrane-spanning segment. At 100–113 (QNQHKWNLGPQACK) the chain is on the extracellular side. Cysteines 112 and 184 form a disulfide. Residues 114–135 (VTAYIFFCNIYISILLLCCISC) traverse the membrane as a helical segment. The Cytoplasmic portion of the chain corresponds to 136–155 (DRYMAVVYALESRGHRHQRT). A helical transmembrane segment spans residues 156-175 (AVTISACVILLVGLVNYPVF). Over 176–198 (DMKVEKSFCFEPLRMNSKIAGYH) the chain is Extracellular. A helical membrane pass occupies residues 199–221 (YLRFTFGFAIPLGILAFTNHQIF). The Cytoplasmic portion of the chain corresponds to 222 to 241 (RSIKLSDSLSAAQKNKVKRS). The helical transmembrane segment at 242–261 (AIAVVTIFLVCFAPYHVVLL) threads the bilayer. Over 262-286 (VKAASFSFYQGDMDAVCAFESRLYT) the chain is Extracellular. The helical transmembrane segment at 287-309 (VSMVFLCLSTVNSVADPIIYVLG) threads the bilayer. At 310 to 382 (TDHSRQEVSR…SPERLPEELC (73 aa)) the chain is on the cytoplasmic side.

It belongs to the G-protein coupled receptor 1 family. As to expression, highly expressed in hematopoietic tissues rich in lymphocytes like spleen and thymus. Weakly expressed in heart and lung. Highly expressed in infiltrating macrophages within atherosclerotic lesions.

It localises to the cell membrane. In terms of biological role, may be a receptor for oxidized free fatty acids derived from linoleic and arachidonic acids such as 9-hydroxyoctadecadienoic acid (9-HODE). Activates a G alpha protein, most likely G alpha(q). May be involved in apoptosis. Functions at the G2/M checkpoint to delay mitosis. May function as a sensor that monitors the oxidative states and mediates appropriate cellular responses such as secretion of paracrine signals and attenuation of proliferation. May mediate ths accumulation of intracellular inositol phosphates at acidic pH through proton-sensing activity. In Mus musculus (Mouse), this protein is Probable G-protein coupled receptor 132 (Gpr132).